Reading from the N-terminus, the 315-residue chain is Neuroguidin (315 aa).

2 disordered regions span residues 127–201 (SEND…KQKR) and 289–315 (VQDI…RKRK). Basic and acidic residues-rich tracts occupy residues 159–168 (KTKEQKEPSG) and 182–200 (YDGD…EKQK). Residues 181-206 (HYDGDLTEADRQKERVEKQKRAALRS) adopt a coiled-coil conformation. A compositionally biased stretch (basic residues) spans 296 to 315 (KPKKKKIIKKGKKKVFRKRK).

This sequence belongs to the SAS10 family. Part of the small subunit (SSU) processome, composed of more than 70 proteins and the RNA chaperone small nucleolar RNA (snoRNA) U3.

The protein localises to the nucleus. Its subcellular location is the nucleolus. The protein resides in the chromosome. It localises to the centromere. It is found in the cytoplasm. The protein localises to the cell projection. Its subcellular location is the axon. The protein resides in the dendrite. It localises to the filopodium. Part of the small subunit (SSU) processome, first precursor of the small eukaryotic ribosomal subunit. During the assembly of the SSU processome in the nucleolus, many ribosome biogenesis factors, an RNA chaperone and ribosomal proteins associate with the nascent pre-rRNA and work in concert to generate RNA folding, modifications, rearrangements and cleavage as well as targeted degradation of pre-ribosomal RNA by the RNA exosome. Its dissociation from the complex determines the transition from state pre-A1 to state pre-A1*. May inhibit mRNA translation. This Danio rerio (Zebrafish) protein is Neuroguidin (ngdn).